The following is a 45-amino-acid chain: NLR family pyrin domain-containing protein 2B (45 aa).

In terms of tissue distribution, expressed in all tissues tested, including spleen, lymph node, thymus, tonsil, peripheral blood leukocyte, bone marrow, liver, heart, brain, placenta, lung, skeletal muscle, kidney and pancreas.

The protein resides in the cytoplasm. Its subcellular location is the nucleus. In terms of biological role, may function as a negative regulator of NF-kappa-B by preventing RELA/p65 phosphorylation at 'Ser-536', thereby inhibiting its transcriptional activity. Through NF-kappa-B regulation may control cytokine release upon Toll-like receptors activation and therefore play a role in modulation of innate immunity. May also play a role in cell cycle progression and apoptotic process. This is NLR family pyrin domain-containing protein 2B from Homo sapiens (Human).